Here is a 342-residue protein sequence, read N- to C-terminus: Ribosomal RNA small subunit methyltransferase C (342 aa).

The protein belongs to the methyltransferase superfamily. RsmC family. Monomer.

The protein localises to the cytoplasm. The catalysed reaction is guanosine(1207) in 16S rRNA + S-adenosyl-L-methionine = N(2)-methylguanosine(1207) in 16S rRNA + S-adenosyl-L-homocysteine + H(+). Specifically methylates the guanine in position 1207 of 16S rRNA in the 30S particle. This Shewanella sp. (strain MR-4) protein is Ribosomal RNA small subunit methyltransferase C.